The following is a 595-amino-acid chain: UvrABC system protein C (595 aa).

One can recognise a GIY-YIG domain in the interval 17 to 94; it reads IEPGCYLMKD…IKQYQPRYNI (78 aa). Residues 199-234 enclose the UVR domain; that stretch reads KTILHNLEQKMQESSESLDFERAKEYRDLIQHIHNL.

Belongs to the UvrC family. Interacts with UvrB in an incision complex.

It localises to the cytoplasm. Functionally, the UvrABC repair system catalyzes the recognition and processing of DNA lesions. UvrC both incises the 5' and 3' sides of the lesion. The N-terminal half is responsible for the 3' incision and the C-terminal half is responsible for the 5' incision. The protein is UvrABC system protein C of Staphylococcus saprophyticus subsp. saprophyticus (strain ATCC 15305 / DSM 20229 / NCIMB 8711 / NCTC 7292 / S-41).